A 1707-amino-acid polypeptide reads, in one-letter code: Histone-lysine N-methyltransferase SETD1A (1707 aa).

An interaction with WDR82 region spans residues 60-89 (LQDPRCHVRSKNRDFSLPVPKFKLDEFYIG). The region spanning 84–172 (DEFYIGQIPL…NIIHAQLDIK (89 aa)) is the RRM domain. 7 disordered regions span residues 194 to 308 (PTGG…YQDA), 331 to 363 (TAATASSSASSSSLSSSSSSSSSSSSSQFRSSD), 381 to 486 (SYPP…AQHS), 506 to 655 (LASD…PPPH), 834 to 854 (AKPFQNAAKQQAKEEDKEKTK), 891 to 1251 (PSFK…GTEV), and 1264 to 1293 (ARRGLPALPAVEDSEATETSDEAERPRPLL). Residues 239–277 (NGTPCSQDTSFSSSRQDTPSSFGQFTPQSSQGTPYTSRG) show a composition bias toward polar residues. 2 stretches are compositionally biased toward low complexity: residues 278–295 (STPYSQDSAYSSSTTSTS) and 331–357 (TAATASSSASSSSLSSSSSSSSSSSSS). Residues 430-440 (SEAPPPEPPEP) show a composition bias toward pro residues. 2 positions are modified to phosphoserine: Ser-459 and Ser-464. Over residues 459 to 473 (SPRPASPARSGSPAP) the composition is skewed to low complexity. The segment covering 474-486 (ETTNESVPFAQHS) has biased composition (polar residues). Ser-508 and Ser-565 each carry phosphoserine. A compositionally biased stretch (polar residues) spans 568–578 (ANGQNQASPCS). 2 stretches are compositionally biased toward pro residues: residues 593–617 (SPPPAPTPPQQPPPPPPPPPPPPPY) and 624–655 (GYPPHQPAYLLPPRPDGPPPPEYPPPPPPPPH). Positions 844-854 (QAKEEDKEKTK) are enriched in basic and acidic residues. Residue Ser-915 is modified to Phosphoserine. Acidic residues-rich tracts occupy residues 918 to 927 (AEEDEDDPEQ) and 976 to 992 (KDEEDDEEDEEDEDREE). Over residues 993 to 1002 (AVDTTKKETE) the composition is skewed to basic and acidic residues. The segment covering 1003–1012 (VSDGEDEESD) has biased composition (acidic residues). Residues 1032–1060 (DSESSSSSSSSSSSSSSSSSSSSSSSSES) are compositionally biased toward low complexity. Positions 1077–1094 (ASPPPREVPVPTPAPVEV) are enriched in pro residues. Ser-1103 is modified (phosphoserine). Positions 1127–1145 (PSAPLRPPEPPAGPPAPAP) are enriched in pro residues. Acidic residues predominate over residues 1275-1284 (EDSEATETSD). The short motif at 1299 to 1303 (EHNYA) is the HCFC1-binding motif (HBM) element. Disordered stretches follow at residues 1307-1417 (KPTP…AYEP) and 1472-1499 (NLTTPKRKRRPQDGPREHQTGSARSEGY). Residues 1308–1323 (PTPPAPALRPPEPVPA) are compositionally biased toward pro residues. Residues 1360–1377 (EGEEEGEEEGEEEEEESS) are compositionally biased toward acidic residues. The span at 1390–1403 (RRRSLRSHARRRRP) shows a compositional bias: basic residues. Residues 1404–1414 (PPPPPPPPPRA) show a composition bias toward pro residues. Positions 1415–1450 (YEPRSEFEQMTILYDIWNSGLDSEDMSYLRLTYERL) are interaction with CFP1. The interval 1450–1537 (LLQQTSGADW…GTNRVLSERR (88 aa)) is interaction with ASH2L, RBBP5 and WDR5. Positions 1492–1497 (GSARSE) match the WDR5 interaction motif (WIN) motif. Positions 1537 to 1542 (RSEQRR) match the RxxxRR motif motif. Residues 1568–1685 (KKLRFGRSRI…VDEEITYDYK (118 aa)) form the SET domain. Tyr-1684 contributes to the S-adenosyl-L-methionine binding site. In terms of domain architecture, Post-SET spans 1691–1707 (NKIPCLCGTESCRGSLN).

It belongs to the class V-like SAM-binding methyltransferase superfamily. In terms of assembly, component of the SET1A/COMPASS complex composed of the catalytic subunit SETD1A, WDR5, WDR82, RBBP5, ASH2L/ASH2, CXXC1/CFP1, HCFC1 and DPY30 homotrimer. Forms a core complex with the evolutionary conserved subcomplex WRAD composed of WDR5, RBBP5, ASH2L/ASH2 and DPY30 subunits; WRAD differentially stimulates the methyltransferase activity. Interacts with BOD1L1 (via COMPASS-Shg1 domain) at replication forks. Interacts with HCFC1. Interacts with ASH2/ASH2L. Interacts with CXXC1/CFP1. Interacts with RBBP5. Interacts (via N-terminal region) with WDR82; the interaction is direct. Interacts (via the RRM domain) with hyperphosphorylated C-terminal domain (CTD) of RNA polymerase II large subunit (POLR2A) only in the presence of WDR82. Binds specifically to CTD heptad repeats phosphorylated on 'Ser-5' of each heptad. Interacts with ZNF335. Interacts with SUPT6H. Interacts with NAP1L1. Interacts (via WIN motif) with WDR5.

The protein localises to the nucleus speckle. It localises to the chromosome. Its subcellular location is the cytoplasm. The enzyme catalyses L-lysyl(4)-[histone H3] + S-adenosyl-L-methionine = N(6)-methyl-L-lysyl(4)-[histone H3] + S-adenosyl-L-homocysteine + H(+). It catalyses the reaction N(6)-methyl-L-lysyl(4)-[histone H3] + S-adenosyl-L-methionine = N(6),N(6)-dimethyl-L-lysyl(4)-[histone H3] + S-adenosyl-L-homocysteine + H(+). It carries out the reaction N(6),N(6)-dimethyl-L-lysyl(4)-[histone H3] + S-adenosyl-L-methionine = N(6),N(6),N(6)-trimethyl-L-lysyl(4)-[histone H3] + S-adenosyl-L-homocysteine + H(+). Histone methyltransferase that catalyzes methyl group transfer from S-adenosyl-L-methionine to the epsilon-amino group of 'Lys-4' of histone H3 (H3K4) via a non-processive mechanism. Part of chromatin remodeling machinery, forms H3K4me1, H3K4me2 and H3K4me3 methylation marks at active chromatin sites where transcription and DNA repair take place. Responsible for H3K4me3 enriched promoters and transcriptional programming of inner mass stem cells and neuron progenitors during embryogenesis. Required for H3K4me1 mark at stalled replication forks. Mediates FANCD2-dependent nucleosome remodeling and RAD51 nucleofilaments stabilization at reversed forks, protecting them from nucleolytic degradation. Does not methylate 'Lys-4' of histone H3 if the neighboring 'Lys-9' residue is already methylated. Binds RNAs involved in RNA processing and the DNA damage response. The polypeptide is Histone-lysine N-methyltransferase SETD1A (SETD1A) (Homo sapiens (Human)).